A 155-amino-acid polypeptide reads, in one-letter code: Small ribosomal subunit protein uS7c (155 aa).

This sequence belongs to the universal ribosomal protein uS7 family. In terms of assembly, part of the 30S ribosomal subunit.

Its subcellular location is the plastid. The protein resides in the chloroplast. One of the primary rRNA binding proteins, it binds directly to 16S rRNA where it nucleates assembly of the head domain of the 30S subunit. This Ananas comosus (Pineapple) protein is Small ribosomal subunit protein uS7c (rps7).